Reading from the N-terminus, the 406-residue chain is Succinylornithine transaminase (406 aa).

Residue lysine 252 is modified to N6-(pyridoxal phosphate)lysine.

This sequence belongs to the class-III pyridoxal-phosphate-dependent aminotransferase family. AstC subfamily. Pyridoxal 5'-phosphate is required as a cofactor.

The enzyme catalyses N(2)-succinyl-L-ornithine + 2-oxoglutarate = N-succinyl-L-glutamate 5-semialdehyde + L-glutamate. Its pathway is amino-acid degradation; L-arginine degradation via AST pathway; L-glutamate and succinate from L-arginine: step 3/5. Catalyzes the transamination of N(2)-succinylornithine and alpha-ketoglutarate into N(2)-succinylglutamate semialdehyde and glutamate. Can also act as an acetylornithine aminotransferase. The polypeptide is Succinylornithine transaminase (Escherichia coli O157:H7).